The chain runs to 438 residues: UDP-glycosyltransferase 84B2 (438 aa).

UDP-alpha-D-glucose is bound by residues S260, 314 to 316, 331 to 339, and 353 to 356; these read GQQ, HCGWNSTIE, and WIDQ.

This sequence belongs to the UDP-glycosyltransferase family.

In Arabidopsis thaliana (Mouse-ear cress), this protein is UDP-glycosyltransferase 84B2 (UGT84B2).